The sequence spans 504 residues: Deoxyguanosinetriphosphate triphosphohydrolase (504 aa).

The 208-residue stretch at 66-273 (RLTHSLEVQQ…MEAADDISYC (208 aa)) folds into the HD domain.

The protein belongs to the dGTPase family. Type 1 subfamily. Homotetramer. Mg(2+) serves as cofactor.

The catalysed reaction is dGTP + H2O = 2'-deoxyguanosine + triphosphate + H(+). In terms of biological role, dGTPase preferentially hydrolyzes dGTP over the other canonical NTPs. The sequence is that of Deoxyguanosinetriphosphate triphosphohydrolase from Cronobacter sakazakii (strain ATCC BAA-894) (Enterobacter sakazakii).